The chain runs to 307 residues: Aspartate carbamoyltransferase catalytic subunit (307 aa).

Carbamoyl phosphate-binding residues include arginine 51 and threonine 52. Position 80 (lysine 80) interacts with L-aspartate. Residues arginine 101, histidine 129, and glutamine 132 each contribute to the carbamoyl phosphate site. The L-aspartate site is built by arginine 162 and arginine 225. Carbamoyl phosphate is bound by residues leucine 264 and proline 265.

The protein belongs to the aspartate/ornithine carbamoyltransferase superfamily. ATCase family. As to quaternary structure, heterododecamer (2C3:3R2) of six catalytic PyrB chains organized as two trimers (C3), and six regulatory PyrI chains organized as three dimers (R2).

The catalysed reaction is carbamoyl phosphate + L-aspartate = N-carbamoyl-L-aspartate + phosphate + H(+). The protein operates within pyrimidine metabolism; UMP biosynthesis via de novo pathway; (S)-dihydroorotate from bicarbonate: step 2/3. Its function is as follows. Catalyzes the condensation of carbamoyl phosphate and aspartate to form carbamoyl aspartate and inorganic phosphate, the committed step in the de novo pyrimidine nucleotide biosynthesis pathway. The chain is Aspartate carbamoyltransferase catalytic subunit from Lachnoclostridium phytofermentans (strain ATCC 700394 / DSM 18823 / ISDg) (Clostridium phytofermentans).